The primary structure comprises 432 residues: Phosphomethylpyrimidine synthase (432 aa).

Substrate-binding positions include N66, M95, Y124, H163, 185 to 187, 226 to 229, and E265; these read SRG and DGLR. H269 contacts Zn(2+). Y292 is a substrate binding site. H333 provides a ligand contact to Zn(2+). Residues C409, C412, and C416 each coordinate [4Fe-4S] cluster.

Belongs to the ThiC family. [4Fe-4S] cluster is required as a cofactor.

It carries out the reaction 5-amino-1-(5-phospho-beta-D-ribosyl)imidazole + S-adenosyl-L-methionine = 4-amino-2-methyl-5-(phosphooxymethyl)pyrimidine + CO + 5'-deoxyadenosine + formate + L-methionine + 3 H(+). The protein operates within cofactor biosynthesis; thiamine diphosphate biosynthesis. Its function is as follows. Catalyzes the synthesis of the hydroxymethylpyrimidine phosphate (HMP-P) moiety of thiamine from aminoimidazole ribotide (AIR) in a radical S-adenosyl-L-methionine (SAM)-dependent reaction. This Caldanaerobacter subterraneus subsp. tengcongensis (strain DSM 15242 / JCM 11007 / NBRC 100824 / MB4) (Thermoanaerobacter tengcongensis) protein is Phosphomethylpyrimidine synthase.